The sequence spans 140 residues: ATP synthase epsilon chain (140 aa).

This sequence belongs to the ATPase epsilon chain family. In terms of assembly, F-type ATPases have 2 components, CF(1) - the catalytic core - and CF(0) - the membrane proton channel. CF(1) has five subunits: alpha(3), beta(3), gamma(1), delta(1), epsilon(1). CF(0) has three main subunits: a, b and c.

The protein localises to the cell inner membrane. Its function is as follows. Produces ATP from ADP in the presence of a proton gradient across the membrane. The protein is ATP synthase epsilon chain of Nitrosomonas europaea (strain ATCC 19718 / CIP 103999 / KCTC 2705 / NBRC 14298).